Here is a 100-residue protein sequence, read N- to C-terminus: MLEHVLIISAYLFSIGIYGLITSRNMVRALMCLELILNAVNMNFVTFSDFFDSRQLKGNIFSIFVIAIAAAEAAIGPAILSSIYRNRKSTRINQSNLLNK.

3 consecutive transmembrane segments (helical) span residues 1–21 (MLEH…YGLI), 31–51 (MCLE…SDFF), and 60–80 (IFSI…PAIL).

Belongs to the complex I subunit 4L family. In terms of assembly, NDH is composed of at least 16 different subunits, 5 of which are encoded in the nucleus.

It is found in the plastid. The protein localises to the chloroplast thylakoid membrane. The catalysed reaction is a plastoquinone + NADH + (n+1) H(+)(in) = a plastoquinol + NAD(+) + n H(+)(out). The enzyme catalyses a plastoquinone + NADPH + (n+1) H(+)(in) = a plastoquinol + NADP(+) + n H(+)(out). NDH shuttles electrons from NAD(P)H:plastoquinone, via FMN and iron-sulfur (Fe-S) centers, to quinones in the photosynthetic chain and possibly in a chloroplast respiratory chain. The immediate electron acceptor for the enzyme in this species is believed to be plastoquinone. Couples the redox reaction to proton translocation, and thus conserves the redox energy in a proton gradient. The chain is NAD(P)H-quinone oxidoreductase subunit 4L, chloroplastic from Cucumis sativus (Cucumber).